The sequence spans 425 residues: Serine--tRNA ligase (425 aa).

Residue 230–232 (TAE) participates in L-serine binding. 261-263 (RSE) contacts ATP. An L-serine-binding site is contributed by E284. 348–351 (EISS) is an ATP binding site. S384 is an L-serine binding site.

Belongs to the class-II aminoacyl-tRNA synthetase family. Type-1 seryl-tRNA synthetase subfamily. Homodimer. The tRNA molecule binds across the dimer.

It localises to the cytoplasm. It carries out the reaction tRNA(Ser) + L-serine + ATP = L-seryl-tRNA(Ser) + AMP + diphosphate + H(+). The catalysed reaction is tRNA(Sec) + L-serine + ATP = L-seryl-tRNA(Sec) + AMP + diphosphate + H(+). Its pathway is aminoacyl-tRNA biosynthesis; selenocysteinyl-tRNA(Sec) biosynthesis; L-seryl-tRNA(Sec) from L-serine and tRNA(Sec): step 1/1. Functionally, catalyzes the attachment of serine to tRNA(Ser). Is also able to aminoacylate tRNA(Sec) with serine, to form the misacylated tRNA L-seryl-tRNA(Sec), which will be further converted into selenocysteinyl-tRNA(Sec). The sequence is that of Serine--tRNA ligase from Streptococcus equi subsp. equi (strain 4047).